We begin with the raw amino-acid sequence, 274 residues long: Mitogen-activated protein kinase 4 (274 aa).

Residues 1–8 and Lys23 each bind ATP; that span reads GCGGNGLV. Residues 1-274 form the Protein kinase domain; the sequence is GCGGNGLVLS…KILTFSPMDR (274 aa). Asp123 serves as the catalytic Proton acceptor. Ser160 carries the post-translational modification Phosphoserine. The short motif at 160-162 is the SEG motif element; it reads SEG.

It belongs to the protein kinase superfamily. CMGC Ser/Thr protein kinase family. MAP kinase subfamily. As to quaternary structure, homodimer. Heterodimer with ERK3/MAPK6. Interacts with MAPKAPK5. Mg(2+) serves as cofactor. Post-translationally, phosphorylated by PAK1, PAK2 and PAK3 in the activation loop resulting in catalytic activation. Phosphorylated by MAPKAPK5 at other sites. In terms of tissue distribution, exclusively detected in the brain, where expression is restricted to the choroid plexus and hippocampus, and to a lesser extent in lung.

The protein localises to the cytoplasm. Its subcellular location is the nucleus. The catalysed reaction is L-seryl-[protein] + ATP = O-phospho-L-seryl-[protein] + ADP + H(+). The enzyme catalyses L-threonyl-[protein] + ATP = O-phospho-L-threonyl-[protein] + ADP + H(+). With respect to regulation, activated by phosphorylation in the activation loop. Atypical MAPK protein. Phosphorylates microtubule-associated protein 2 (MAP2) and MAPKAPK5. The precise role of the complex formed with MAPKAPK5 is still unclear, but the complex follows a complex set of phosphorylation events: upon interaction with atypical MAPKAPK5, ERK4/MAPK4 is phosphorylated and then mediates phosphorylation and activation of MAPKAPK5, which in turn phosphorylates ERK4/MAPK4. May promote entry in the cell cycle. The polypeptide is Mitogen-activated protein kinase 4 (Mapk4) (Rattus norvegicus (Rat)).